Reading from the N-terminus, the 249-residue chain is uncharacterized protein (249 aa).

Residues 7-64 (PRVHVFLAEKGVGSRRFCEELIRKKLVRVNNTIAKLGDKVTLGDRIIYKKQIFVFKDF) form the S4 RNA-binding domain. The active-site Nucleophile is D112.

The protein belongs to the pseudouridine synthase RsuA family.

The catalysed reaction is a uridine in RNA = a pseudouridine in RNA. This is an uncharacterized protein from Borreliella burgdorferi (strain ATCC 35210 / DSM 4680 / CIP 102532 / B31) (Borrelia burgdorferi).